Here is a 573-residue protein sequence, read N- to C-terminus: Adenine deaminase (573 aa).

It belongs to the metallo-dependent hydrolases superfamily. Adenine deaminase family. Requires Mn(2+) as cofactor.

The catalysed reaction is adenine + H2O + H(+) = hypoxanthine + NH4(+). This Bacillus licheniformis (strain ATCC 14580 / DSM 13 / JCM 2505 / CCUG 7422 / NBRC 12200 / NCIMB 9375 / NCTC 10341 / NRRL NRS-1264 / Gibson 46) protein is Adenine deaminase.